Here is a 777-residue protein sequence, read N- to C-terminus: Serine/threonine-protein kinase PLK4 (777 aa).

Residues 14-268 form the Protein kinase domain; that stretch reads YEVQHLLGKG…LEQVLRHPFL (255 aa). Residues 20-28 and Lys43 contribute to the ATP site; that span reads LGKGGFASV. Asp139 (proton acceptor) is an active-site residue. A compositionally biased stretch (polar residues) spans 371–381; it reads TNNLAPFTSDS. Residues 371–390 form a disordered region; it reads TNNLAPFTSDSDMIPSPVGE. The region spanning 390–507 is the Cryptic POLO box 1 (CPB1) domain; the sequence is EKRLLMPPLE…ARFVGLVKSK (118 aa). One can recognise a Cryptic POLO box 2 (CPB2) domain in the interval 508–611; the sequence is TPKITFFSSL…GRRPAADMHA (104 aa). The POLO box domain occupies 669 to 748; that stretch reads PIKRITVPEI…MPQLQMKLKC (80 aa).

It belongs to the protein kinase superfamily. Ser/Thr protein kinase family. CDC5/Polo subfamily. As to quaternary structure, homodimer. Ubiquitinated by the SCF(Slimb) ubiquitin ligase complex; leading to its degradation by the proteasome during interphase and regulating centriole number and ensuring the block to centriole reduplication.

It localises to the cytoplasm. Its subcellular location is the cytoskeleton. It is found in the microtubule organizing center. The protein resides in the centrosome. The protein localises to the centriole. The enzyme catalyses L-seryl-[protein] + ATP = O-phospho-L-seryl-[protein] + ADP + H(+). It catalyses the reaction L-threonyl-[protein] + ATP = O-phospho-L-threonyl-[protein] + ADP + H(+). Functionally, serine/threonine-protein kinase that plays a central role in centriole duplication. Able to trigger procentriole formation on the surface of the mother centriole cylinder, using mother centriole as a platform, leading to the recruitment of centriole biogenesis proteins such as sas-6. When overexpressed, it is able to induce centrosome amplification through the simultaneous generation of multiple procentrioles adjoining each parental centriole during S phase. Centrosome amplification following overexpression can initiate tumorigenesis, highlighting the importance of centrosome regulation in cancers. This is Serine/threonine-protein kinase PLK4 (SAK) from Drosophila pseudoobscura pseudoobscura (Fruit fly).